Reading from the N-terminus, the 272-residue chain is Ribosomal RNA small subunit methyltransferase A (272 aa).

Positions 18, 20, 45, 66, 91, and 113 each coordinate S-adenosyl-L-methionine.

Belongs to the class I-like SAM-binding methyltransferase superfamily. rRNA adenine N(6)-methyltransferase family. RsmA subfamily.

Its subcellular location is the cytoplasm. It carries out the reaction adenosine(1518)/adenosine(1519) in 16S rRNA + 4 S-adenosyl-L-methionine = N(6)-dimethyladenosine(1518)/N(6)-dimethyladenosine(1519) in 16S rRNA + 4 S-adenosyl-L-homocysteine + 4 H(+). Its function is as follows. Specifically dimethylates two adjacent adenosines (A1518 and A1519) in the loop of a conserved hairpin near the 3'-end of 16S rRNA in the 30S particle. May play a critical role in biogenesis of 30S subunits. The protein is Ribosomal RNA small subunit methyltransferase A of Pectobacterium atrosepticum (strain SCRI 1043 / ATCC BAA-672) (Erwinia carotovora subsp. atroseptica).